Reading from the N-terminus, the 367-residue chain is Phospho-N-acetylmuramoyl-pentapeptide-transferase (367 aa).

10 helical membrane passes run 16 to 36 (LLLAAAAFILTLIVGGWWVHF), 62 to 82 (TMGGVMIVSTVVVLTVLFNLV), 87 to 107 (MLLPLGVMISFAVLGAIDDWL), 125 to 145 (FWIMTAVAFVASLALYLPQPY), 158 to 178 (VGEVNIGLWFIPIAVLIIVFI), 190 to 210 (SLAGWNLTLSFGAYGVITFLA), 214 to 234 (LTNLMAFCFTVVGACAAFLWY), 240 to 260 (QVFMGDLGALSLGATLAVVAL), 264 to 284 (QWILLPVIGIVFVVEALSTLI), and 326 to 346 (FVLIGTVAAMVGISLALIFGS).

This sequence belongs to the glycosyltransferase 4 family. MraY subfamily. It depends on Mg(2+) as a cofactor.

Its subcellular location is the cell membrane. The enzyme catalyses UDP-N-acetyl-alpha-D-muramoyl-L-alanyl-gamma-D-glutamyl-meso-2,6-diaminopimeloyl-D-alanyl-D-alanine + di-trans,octa-cis-undecaprenyl phosphate = di-trans,octa-cis-undecaprenyl diphospho-N-acetyl-alpha-D-muramoyl-L-alanyl-D-glutamyl-meso-2,6-diaminopimeloyl-D-alanyl-D-alanine + UMP. It participates in cell wall biogenesis; peptidoglycan biosynthesis. Catalyzes the initial step of the lipid cycle reactions in the biosynthesis of the cell wall peptidoglycan: transfers peptidoglycan precursor phospho-MurNAc-pentapeptide from UDP-MurNAc-pentapeptide onto the lipid carrier undecaprenyl phosphate, yielding undecaprenyl-pyrophosphoryl-MurNAc-pentapeptide, known as lipid I. The protein is Phospho-N-acetylmuramoyl-pentapeptide-transferase of Chloroflexus aggregans (strain MD-66 / DSM 9485).